A 273-amino-acid polypeptide reads, in one-letter code: Large ribosomal subunit protein uL2c (273 aa).

Belongs to the universal ribosomal protein uL2 family. Part of the 50S ribosomal subunit.

Its subcellular location is the plastid. It is found in the apicoplast. The protein is Large ribosomal subunit protein uL2c (rpl2) of Eimeria tenella (Coccidian parasite).